The chain runs to 106 residues: Diptericin A (106 aa).

Residues 1–19 (MQFTIAVALLCCAIASTLA) form the signal peptide. A propeptide spans 20–23 (YPMP) (removed by a dipeptidylpeptidase).

Belongs to the attacin/sarcotoxin-2 family.

Its subcellular location is the secreted. Functionally, antimicrobial peptide required to resist Gram-negative bacterial infections, regulated by Dredd. The protein is Diptericin A of Drosophila melanogaster (Fruit fly).